Reading from the N-terminus, the 128-residue chain is uncharacterized protein (128 aa).

The next 4 membrane-spanning stretches (helical) occupy residues 2-22 (LPFYFLSVATNAAIGFILTVL), 34-54 (FLYDATFSLVLALLSGIAAVC), 64-84 (LPVLGDLIPTLAGGTGCALFL), and 108-128 (LGLFSLAASILHLLFAPTLFL).

It localises to the cell membrane. This is an uncharacterized protein from Treponema pallidum (strain Nichols).